The following is a 64-amino-acid chain: MNILKTIRFISQSSMTSWFLQTCYRRGICRRCYTPLGSYMIFGIVHYFCSYHIGIGTHDLHFGS.

A helical membrane pass occupies residues 33–55 (YTPLGSYMIFGIVHYFCSYHIGI).

It localises to the membrane. This is an uncharacterized protein from Saccharomyces cerevisiae (strain ATCC 204508 / S288c) (Baker's yeast).